A 490-amino-acid polypeptide reads, in one-letter code: Glucose-6-phosphate 1-dehydrogenase (490 aa).

NADP(+) is bound by residues R48, 90–91, and K145; that span reads DI. 4 residues coordinate substrate: H175, K179, E213, and D232. The active-site Proton acceptor is H237. Substrate contacts are provided by K340 and K345.

Belongs to the glucose-6-phosphate dehydrogenase family.

It catalyses the reaction D-glucose 6-phosphate + NADP(+) = 6-phospho-D-glucono-1,5-lactone + NADPH + H(+). It functions in the pathway carbohydrate degradation; pentose phosphate pathway; D-ribulose 5-phosphate from D-glucose 6-phosphate (oxidative stage): step 1/3. Functionally, catalyzes the oxidation of glucose 6-phosphate to 6-phosphogluconolactone. The sequence is that of Glucose-6-phosphate 1-dehydrogenase from Buchnera aphidicola subsp. Baizongia pistaciae (strain Bp).